A 122-amino-acid polypeptide reads, in one-letter code: Large ribosomal subunit protein uL14 (122 aa).

The protein belongs to the universal ribosomal protein uL14 family. Part of the 50S ribosomal subunit. Forms a cluster with proteins L3 and L19. In the 70S ribosome, L14 and L19 interact and together make contacts with the 16S rRNA in bridges B5 and B8.

In terms of biological role, binds to 23S rRNA. Forms part of two intersubunit bridges in the 70S ribosome. The sequence is that of Large ribosomal subunit protein uL14 from Rickettsia bellii (strain OSU 85-389).